Here is a 446-residue protein sequence, read N- to C-terminus: Sensor protein PfeS (446 aa).

Topologically, residues 1-9 (MRRHPLLWK) are cytoplasmic. The helical transmembrane segment at 10–30 (LALLQVGFCLLLTWLIYTWGL) threads the bilayer. Topologically, residues 31 to 155 (SVERSTYFLA…LLPGGLTPWT (125 aa)) are periplasmic. Residues 156–176 (HLVTHGIVPTLLAALLGLLLY) traverse the membrane as a helical segment. The HAMP domain occupies 177–233 (RHLVVPLNRLRDRADALRADELESTPLAAPLAARRDELGELAQALEHMAERLRLSLA). Residues 177–446 (RHLVVPLNRL…CLHLWLPAAA (270 aa)) are Cytoplasmic-facing. Residues 241 to 446 (TLSHELRTPL…CLHLWLPAAA (206 aa)) enclose the Histidine kinase domain. Position 244 is a phosphohistidine; by autocatalysis (His-244).

The protein localises to the cell inner membrane. It catalyses the reaction ATP + protein L-histidine = ADP + protein N-phospho-L-histidine.. Member of the two-component regulatory system PfeR/PfeS. May activate PfeR by phosphorylation. This is Sensor protein PfeS (pfeS) from Pseudomonas aeruginosa (strain ATCC 15692 / DSM 22644 / CIP 104116 / JCM 14847 / LMG 12228 / 1C / PRS 101 / PAO1).